A 322-amino-acid chain; its full sequence is Acetyl-coenzyme A carboxylase carboxyl transferase subunit alpha (322 aa).

Residues 43-297 form the CoA carboxyltransferase C-terminal domain; sequence ALKSKSNALT…KEVLTQQLNK (255 aa).

This sequence belongs to the AccA family. As to quaternary structure, acetyl-CoA carboxylase is a heterohexamer composed of biotin carboxyl carrier protein (AccB), biotin carboxylase (AccC) and two subunits each of ACCase subunit alpha (AccA) and ACCase subunit beta (AccD).

It localises to the cytoplasm. The catalysed reaction is N(6)-carboxybiotinyl-L-lysyl-[protein] + acetyl-CoA = N(6)-biotinyl-L-lysyl-[protein] + malonyl-CoA. The protein operates within lipid metabolism; malonyl-CoA biosynthesis; malonyl-CoA from acetyl-CoA: step 1/1. Functionally, component of the acetyl coenzyme A carboxylase (ACC) complex. First, biotin carboxylase catalyzes the carboxylation of biotin on its carrier protein (BCCP) and then the CO(2) group is transferred by the carboxyltransferase to acetyl-CoA to form malonyl-CoA. This is Acetyl-coenzyme A carboxylase carboxyl transferase subunit alpha from Vesicomyosocius okutanii subsp. Calyptogena okutanii (strain HA).